Reading from the N-terminus, the 433-residue chain is Acetyl-CoA-benzylalcohol acetyltransferase (433 aa).

Catalysis depends on proton acceptor residues histidine 152 and aspartate 377.

It belongs to the plant acyltransferase family. The N-terminus is blocked. In terms of tissue distribution, expressed in petals, style, sepals and stamens. Very low expression in stigma and not detected in leaves.

The catalysed reaction is benzyl alcohol + acetyl-CoA = benzyl acetate + CoA. It carries out the reaction (E)-cinnamyl alcohol + acetyl-CoA = (E)-cinnamyl acetate + CoA. Its function is as follows. Involved in the biosynthesis of benzyl acetate, a major constituent of the floral scent. Can use benzylalcohol, cinnamylalcohol, 3-cis-hexene-1-ol or heptanol as substrates. Has some activity with 2-phenylethanol and 2-naphtalene-ethanol, but no activity with linalool, 2-hydroxybenzylalcohol, 3-hydroxybenzylalcohol or 4-hydroxybenzylalcohol. The chain is Acetyl-CoA-benzylalcohol acetyltransferase (BEAT) from Clarkia breweri (Fairy fans).